We begin with the raw amino-acid sequence, 467 residues long: Zinc finger protein 410 (467 aa).

Disordered stretches follow at residues 84–111 and 187–214; these read PDGE…SLLQ and NAKT…PLPQ. C2H2-type zinc fingers lie at residues 219–243, 249–273, 279–303, 309–333, and 339–362; these read LKCT…LKTH, FICP…MRTH, FVCP…LRIH, FLCE…LVVH, and HQCQ…RKHH. Zn(2+)-binding residues include cysteine 221, cysteine 226, histidine 239, histidine 243, cysteine 251, cysteine 256, histidine 269, histidine 273, cysteine 281, cysteine 286, histidine 299, histidine 303, cysteine 311, cysteine 316, histidine 329, histidine 333, cysteine 341, cysteine 344, histidine 357, and histidine 361.

In terms of assembly, interacts with CDKN2A/p14ARF. Post-translationally, O-glycosylated. O-GlcNAcylation may occur in response to increasing glucose levels and affect transcription factor activity. Sumoylated. Sumoylation increases its half-life, possibly by blocking ubiquitin-mediated degradation.

It is found in the nucleus. The protein resides in the chromosome. Functionally, transcription factor that binds to the sequence motif 5'-CATCCCATAATA-3', and is specifically required to silence expression of fetal hemoglobin in adult erythroid cells. Prevents expression of fetal hemoglobin genes HBG1 and HBG2 through CHD4: acts as a direct transcriptional activator of CHD4, a central component of the NuRD complex that represses transcription of fetal hemoglobin genes HBG1 and HBG2 in erythroid cells. May also activate transcription of matrix-remodeling genes such as MMP1 during fibroblast senescence. May activate transcription of the gap junction gene GJC1, perhaps in response to increasing glucose. However, recent studies suggest that ZNF410 is dedicated to regulate expression of a single gene: CHD4. The polypeptide is Zinc finger protein 410 (Bos taurus (Bovine)).